The primary structure comprises 287 residues: uncharacterized protein (287 aa).

Residues 1 to 20 (MKVICGSVFLFSLFFQVVLG) form the signal peptide. Residues 22 to 201 (YFSSSSGNPN…AFYGPRRNIK (180 aa)) lie on the Extracellular side of the membrane. Residues N120, N154, and N166 are each glycosylated (N-linked (GlcNAc...) asparagine). Residues 202-222 (AAIAVPSVILGLILVALVYYA) form a helical membrane-spanning segment. Residues 223–287 (YRKDTWKIYM…YYQSQVKKFH (65 aa)) are Cytoplasmic-facing.

It localises to the membrane. This is an uncharacterized protein from Schizosaccharomyces pombe (strain 972 / ATCC 24843) (Fission yeast).